A 269-amino-acid polypeptide reads, in one-letter code: Protein OPG079 (269 aa).

It belongs to the orthopoxvirus OPG079 family. Homoomultimer (Potential). Interacts with the small subunit of ribonucleotide reductase. Interacts with host FAM111A; this interaction protomtes OPG079 degradation through autophagy.

The protein resides in the host cytoplasm. Plays an essential role in viral DNA replication. Binds to ssDNA with high affinity and localizes to cytoplasmic factories where nascent viral genomes accumulate. May disrupt loops, hairpins and other secondary structures present on ssDNA to reduce and eliminate pausing of viral DNA polymerase at specific sites during elongation. This is Protein OPG079 (OPG079) from Vaccinia virus (strain Copenhagen) (VACV).